The following is a 409-amino-acid chain: Dual-specificity RNA methyltransferase RlmN (409 aa).

The active-site Proton acceptor is the glutamate 121. In terms of domain architecture, Radical SAM core spans 127 to 376 (EEGRGTLCIS…IRTPRGRDIL (250 aa)). Cysteine 134 and cysteine 379 are disulfide-bonded. [4Fe-4S] cluster is bound by residues cysteine 141, cysteine 145, and cysteine 148. S-adenosyl-L-methionine contacts are provided by residues 205–206 (GE), serine 237, 259–261 (SLH), and asparagine 336. The active-site S-methylcysteine intermediate is the cysteine 379.

This sequence belongs to the radical SAM superfamily. RlmN family. It depends on [4Fe-4S] cluster as a cofactor.

The protein resides in the cytoplasm. The catalysed reaction is adenosine(2503) in 23S rRNA + 2 reduced [2Fe-2S]-[ferredoxin] + 2 S-adenosyl-L-methionine = 2-methyladenosine(2503) in 23S rRNA + 5'-deoxyadenosine + L-methionine + 2 oxidized [2Fe-2S]-[ferredoxin] + S-adenosyl-L-homocysteine. It carries out the reaction adenosine(37) in tRNA + 2 reduced [2Fe-2S]-[ferredoxin] + 2 S-adenosyl-L-methionine = 2-methyladenosine(37) in tRNA + 5'-deoxyadenosine + L-methionine + 2 oxidized [2Fe-2S]-[ferredoxin] + S-adenosyl-L-homocysteine. Specifically methylates position 2 of adenine 2503 in 23S rRNA and position 2 of adenine 37 in tRNAs. m2A2503 modification seems to play a crucial role in the proofreading step occurring at the peptidyl transferase center and thus would serve to optimize ribosomal fidelity. The chain is Dual-specificity RNA methyltransferase RlmN from Rhizobium etli (strain ATCC 51251 / DSM 11541 / JCM 21823 / NBRC 15573 / CFN 42).